The chain runs to 339 residues: MDFQTLHQLSKTELHCHLDGSLSLSCIRQLAKMIDRKLPATDDELRRLVQAPADSENLGDYLKAFDFVAPLLQTKKALQLAAYDVVEQAAEENVRYIEIRFAPVFSLAGGLSLVEATQAVIEGLHQGMATYDIMAKALVCGMRQLPNTDNQTMFKTTAPLLGSTLVGGDFAGNEADFPTNVCAPAIKTAQSLGVPLTFHAGECHCPQNIAEAVRLGIPRIGHATACFDQPALIEKIVETGTTVELCLTSNLQTKAARTLAEFPYQALKKAGAKITINTDNRTVSNTTLTQEYQRYQQAFGTTAVDFLAFNLNAIDAAFIPDADKKSLRDRLHQDYATYC.

Residues His-15 and His-17 each contribute to the Zn(2+) site. Substrate-binding residues include His-17, Asp-19, and Gly-172. His-199 contacts Zn(2+). Residue Glu-202 is the Proton donor of the active site. Position 279 (Asp-279) interacts with Zn(2+).

The protein belongs to the metallo-dependent hydrolases superfamily. Adenosine and AMP deaminases family. Adenosine deaminase subfamily. The cofactor is Zn(2+).

It catalyses the reaction adenosine + H2O + H(+) = inosine + NH4(+). The catalysed reaction is 2'-deoxyadenosine + H2O + H(+) = 2'-deoxyinosine + NH4(+). In terms of biological role, catalyzes the hydrolytic deamination of adenosine and 2-deoxyadenosine. The sequence is that of Adenosine deaminase from Lacticaseibacillus casei (strain BL23) (Lactobacillus casei).